A 63-amino-acid polypeptide reads, in one-letter code: Large ribosomal subunit protein bL28 (63 aa).

Residues 1–20 (MSRRCAITGKGPMVGNNVSH) are disordered.

The protein belongs to the bacterial ribosomal protein bL28 family.

The polypeptide is Large ribosomal subunit protein bL28 (Campylobacter curvus (strain 525.92)).